The chain runs to 156 residues: 6,7-dimethyl-8-ribityllumazine synthase (156 aa).

Residues Phe22, 56 to 58 (AFE), and 80 to 82 (AVV) contribute to the 5-amino-6-(D-ribitylamino)uracil site. 85-86 (ET) serves as a coordination point for (2S)-2-hydroxy-3-oxobutyl phosphate. Catalysis depends on His88, which acts as the Proton donor. Residue Phe113 participates in 5-amino-6-(D-ribitylamino)uracil binding. Arg127 provides a ligand contact to (2S)-2-hydroxy-3-oxobutyl phosphate.

The protein belongs to the DMRL synthase family.

It catalyses the reaction (2S)-2-hydroxy-3-oxobutyl phosphate + 5-amino-6-(D-ribitylamino)uracil = 6,7-dimethyl-8-(1-D-ribityl)lumazine + phosphate + 2 H2O + H(+). It functions in the pathway cofactor biosynthesis; riboflavin biosynthesis; riboflavin from 2-hydroxy-3-oxobutyl phosphate and 5-amino-6-(D-ribitylamino)uracil: step 1/2. Functionally, catalyzes the formation of 6,7-dimethyl-8-ribityllumazine by condensation of 5-amino-6-(D-ribitylamino)uracil with 3,4-dihydroxy-2-butanone 4-phosphate. This is the penultimate step in the biosynthesis of riboflavin. The protein is 6,7-dimethyl-8-ribityllumazine synthase of Pediococcus pentosaceus (strain ATCC 25745 / CCUG 21536 / LMG 10740 / 183-1w).